Here is a 419-residue protein sequence, read N- to C-terminus: Dimethylallyltryptophan synthase 1 (419 aa).

L-tryptophan-binding residues include Phe-81, Met-82, and Glu-90. Position 81 (Phe-81) interacts with L-tyrosine. Residues Arg-105, Lys-187, Tyr-189, Arg-251, Lys-253, and Tyr-255 each contribute to the (2E)-geranyl diphosphate site. Dimethylallyl diphosphate-binding residues include Arg-105, Lys-187, Tyr-189, Arg-251, Lys-253, and Tyr-255. Arg-257 is a binding site for L-tryptophan. Residue Arg-257 coordinates L-tyrosine. Residues Lys-332 and Tyr-334 each coordinate (2E)-geranyl diphosphate. Dimethylallyl diphosphate contacts are provided by Lys-332 and Tyr-334. Residue Tyr-389 participates in L-tryptophan binding. An L-tyrosine-binding site is contributed by Tyr-389. Tyr-404 is a (2E)-geranyl diphosphate binding site.

It belongs to the tryptophan dimethylallyltransferase family.

It carries out the reaction L-tyrosine + dimethylallyl diphosphate = 4-O-dimethylallyl-L-tyrosine + diphosphate. Dimethylallyltryptophan synthase; part of the DMATS1 gene cluster that mediates the biosynthesis of a reversely N-prenylated monomeric L-tryptophan (r-N-DMAT). DMATS1 catalyzes the reverse N-prenylation of L-Trp with DMAPP to yield N-dimethylallyl-L-tryptophan. DMATS1 exhibits unusually broad substrate specificity and can utilize geranyl diphosphate (GPP) or L-Tyr as an alternative prenyl donor or acceptor, respectively. Is able to catalyze both forward and reverse prenylation, i.e., at C1 or C3 of DMAPP; and it can catalyze C-N and C-O bond-forming reactions. The main product of the cluster is the reverse-N-dimethylallyl-L-tryptophan (r-N-DMAT) produced by the dimethylallyltryptophan synthase DMATS1 and it remains unclear whether this metabolite undergoes further modifications when silent gene clusters are activated. The acetylated form of r-N-DMAT, ac-r-N-DMAT, is also produced. The roles of the cytochrome P450 monooxygenase FFUJ_09176 and the methyltransferase FFUJ_09178 have still to be elucidated. In Gibberella fujikuroi (strain CBS 195.34 / IMI 58289 / NRRL A-6831) (Bakanae and foot rot disease fungus), this protein is Dimethylallyltryptophan synthase 1.